A 229-amino-acid polypeptide reads, in one-letter code: Putative germin-like protein 12-3 (229 aa).

Residues 1-22 (MASSNFFLLIPLIALVTTQAMA) form the signal peptide. The cysteines at positions 32 and 47 are disulfide-linked. Positions 62-217 (ANLDKPMDIT…AFQVDKKAVD (156 aa)) constitute a Cupin type-1 domain. N78 carries an N-linked (GlcNAc...) asparagine glycan. The Mn(2+) site is built by H111, H113, E118, and H162.

The protein belongs to the germin family. In terms of assembly, oligomer (believed to be a pentamer but probably hexamer).

The protein resides in the secreted. It is found in the extracellular space. Its subcellular location is the apoplast. Functionally, may play a role in plant defense. Probably has no oxalate oxidase activity even if the active site is conserved. This Oryza sativa subsp. japonica (Rice) protein is Putative germin-like protein 12-3.